The primary structure comprises 461 residues: Mitochondrial distribution and morphology protein 12 (461 aa).

An SMP-LTD domain is found at M1–P454. Disordered stretches follow at residues R75–G104 and D226–A301. 2 stretches are compositionally biased toward polar residues: residues R80–D97 and R272–P288.

Belongs to the MDM12 family. Component of the ER-mitochondria encounter structure (ERMES) or MDM complex, composed of MMM1, MDM10, MDM12 and MDM34. An MMM1 homodimer associates with one molecule of MDM12 on each side in a pairwise head-to-tail manner, and the SMP-LTD domains of MMM1 and MDM12 generate a continuous hydrophobic tunnel for phospholipid trafficking.

It localises to the mitochondrion outer membrane. The protein resides in the endoplasmic reticulum membrane. In terms of biological role, component of the ERMES/MDM complex, which serves as a molecular tether to connect the endoplasmic reticulum (ER) and mitochondria. Components of this complex are involved in the control of mitochondrial shape and protein biogenesis, and function in nonvesicular lipid trafficking between the ER and mitochondria. MDM12 is required for the interaction of the ER-resident membrane protein MMM1 and the outer mitochondrial membrane-resident beta-barrel protein MDM10. The MDM12-MMM1 subcomplex functions in the major beta-barrel assembly pathway that is responsible for biogenesis of all mitochondrial outer membrane beta-barrel proteins, and acts in a late step after the SAM complex. The MDM10-MDM12-MMM1 subcomplex further acts in the TOM40-specific pathway after the action of the MDM12-MMM1 complex. Essential for establishing and maintaining the structure of mitochondria and maintenance of mtDNA nucleoids. This Mycosarcoma maydis (Corn smut fungus) protein is Mitochondrial distribution and morphology protein 12.